We begin with the raw amino-acid sequence, 292 residues long: Carbapenem-hydrolyzing beta-lactamase transcriptional activator (292 aa).

One can recognise an HTH lysR-type domain in the interval 5–62; sequence IPLNALRAFEASARYLNFTKAGLELHVSQAAVSQHVRTLEAILGVNLFKRLPRGLQLT. The segment at residues 22 to 41 is a DNA-binding region (H-T-H motif); the sequence is FTKAGLELHVSQAAVSQHVR.

It belongs to the LysR transcriptional regulatory family.

In terms of biological role, this protein is a positive regulator of gene expression of carbapenem-hydrolyzing beta-lactamase (smeA). Seems to also be a repressor of its own transcription. The chain is Carbapenem-hydrolyzing beta-lactamase transcriptional activator (smeR) from Serratia marcescens.